Consider the following 130-residue polypeptide: Small ribosomal subunit protein uS8 (130 aa).

The protein belongs to the universal ribosomal protein uS8 family. Part of the 30S ribosomal subunit. Contacts proteins S5 and S12.

In terms of biological role, one of the primary rRNA binding proteins, it binds directly to 16S rRNA central domain where it helps coordinate assembly of the platform of the 30S subunit. The protein is Small ribosomal subunit protein uS8 of Ruegeria sp. (strain TM1040) (Silicibacter sp.).